Here is a 547-residue protein sequence, read N- to C-terminus: bZIP transcription factor 29 (547 aa).

Disordered regions lie at residues 1–199 (MGDT…SGGE), 244–312 (NSSE…DIAP), and 333–356 (GDESLKPPPSPGSMSRKVSPTNSV). Over residues 15 to 52 (LHSSFGTTSSSIPKNPISQLDLNPNFIRSSAPQFSKPF) the composition is skewed to polar residues. The segment covering 63-73 (PSHPNLIPPTS) has biased composition (pro residues). A compositionally biased stretch (polar residues) spans 74–89 (PFSQIPTTRQPGSHNF). Residues 120 to 132 (FRDHDVSMEDRDS) are compositionally biased toward basic and acidic residues. Residues 134–157 (VFNSNHSLPPSPFTRCNSTSSSSL) are compositionally biased toward polar residues. Positions 249–263 (DDSKNGNENRDDMES) are enriched in basic and acidic residues. Positions 264–275 (SRASGTKTNGSD) are enriched in polar residues. The span at 279–294 (ESSSVNESANNNMNSS) shows a compositional bias: low complexity. Residues 344–356 (GSMSRKVSPTNSV) are compositionally biased toward polar residues. The region spanning 394–457 (DPKRVKRILA…MGLTNQNNEL (64 aa)) is the bZIP domain. The interval 396 to 417 (KRVKRILANRQSAARSKERKMR) is basic motif. A coiled-coil region spans residues 416-469 (MRYIVELEHKVQTLQTEATTLSAQLTLLQRDMMGLTNQNNELKFRLQAMEQQAR). Positions 422 to 457 (LEHKVQTLQTEATTLSAQLTLLQRDMMGLTNQNNEL) are leucine-zipper. The span at 517 to 535 (QLRQQPQQMQQQSHQQNHQ) shows a compositional bias: low complexity. A disordered region spans residues 517–547 (QLRQQPQQMQQQSHQQNHQNGTMATKSESNE). Polar residues predominate over residues 536-547 (NGTMATKSESNE).

Forms homodimers. Expressed in roots, leaves and flowers. Expressed in the root tips, lateral root primordia, and guard cells of leaves, hypocotyls and anthers.

It is found in the cytoplasm. The protein resides in the nucleus. Its function is as follows. Transcription factor that acts as a repressor of reproductive development, meristem size and plant growth. Regulates meristem size, cell size and cell number during plant development. Binds to the promoters of the cell cycle regulators CYCB1-2 and SMR4, and genes involved in cell wall organization, such as XTH9, EXPA1 and EXPA3. Possesses transactivation activity in yeast. Possesses transactivation activity in plant protoplasts. Plays a role in abiotic stress response by binding to the 5'-CAGCTG-3' DNA sequence found in the promoters of MYB44 and TRX8. Plays a role in osmosensory response by binding to the 5'-AGCTGT/G-3' DNA sequence found in the promoters of the hypoosmolarity-responsive genes CYP707A1 and CYP707A3. Binds to the 5'-AGCTGT-3' DNA sequence found in the promoter of the ZAT1 gene in response to abiotic stresses, such as oxidative stress, high-light, osmotic shock, salt and heat stresses. The protein is bZIP transcription factor 29 of Arabidopsis thaliana (Mouse-ear cress).